The following is a 1022-amino-acid chain: Collagen alpha-2(VI) chain (1022 aa).

The first 27 residues, 1 to 27, serve as a signal peptide directing secretion; it reads MSRRTAEMFQQAFLSTLLCVALVPLHA. A nonhelical region region spans residues 28 to 255; sequence QFDDEPVTSC…CYKMTCLEIA (228 aa). The 125-residue stretch at 44 to 168 folds into the VWFA 1 domain; sequence PISVYFVIDT…VITDGHVTGS (125 aa). N-linked (GlcNAc...) asparagine glycosylation is found at Asn141 and Asn215. Residues 256-590 form a triple-helical region region; that stretch reads GPAGPKGYRG…PGPPGDPGLT (335 aa). A disordered region spans residues 263–587; it reads YRGQKGAKGN…EGTPGPPGDP (325 aa). A compositionally biased stretch (low complexity) spans 287–299; that stretch reads DPGIEGPIGYPGP. The segment covering 306–318 has biased composition (basic and acidic residues); that stretch reads KGEKGEIGSDGRR. Asn327 carries N-linked (GlcNAc...) asparagine glycosylation. 2 consecutive short sequence motifs (cell attachment site) follow at residues 348-350 and 366-368; these read RGD. A compositionally biased stretch (basic and acidic residues) spans 363-377; it reads QGERGDEGMKGDPGR. Residues 389-399 show a composition bias toward low complexity; the sequence is EKGSPGIPGNP. 5 consecutive short sequence motifs (cell attachment site) follow at residues 426–428, 444–446, 465–467, 489–491, and 498–500; these read RGD. An interruption in collagenous region region spans residues 514 to 519; that stretch reads GFSYPG. The segment covering 534-543 has biased composition (gly residues); that stretch reads GPKGGRGELG. The nonhelical region stretch occupies residues 591-1022; sequence DCDVMTYVRE…FFDRFIRWIC (432 aa). VWFA domains follow at residues 613-738 and 833-957; these read ALDI…YDPR and DIVF…ITGS. Asn630 and Asn897 each carry an N-linked (GlcNAc...) asparagine glycan.

The protein belongs to the type VI collagen family. In terms of assembly, trimers composed of three different chains: alpha 1(VI), alpha 2(VI), and alpha 3(VI). In terms of processing, prolines at the third position of the tripeptide repeating unit (G-X-Y) are hydroxylated in some or all of the chains.

It is found in the secreted. The protein localises to the extracellular space. It localises to the extracellular matrix. Functionally, collagen VI acts as a cell-binding protein. This Gallus gallus (Chicken) protein is Collagen alpha-2(VI) chain (COL6A2).